Here is a 180-residue protein sequence, read N- to C-terminus: Probable galaptin lec-8 (180 aa).

One can recognise a Galectin domain in the interval 11-138 (SAHAIREQLR…AAHIDEISFS (128 aa)).

This Caenorhabditis elegans protein is Probable galaptin lec-8 (lec-8).